The primary structure comprises 792 residues: RNA-binding protein RRM4 (792 aa).

Residues 37–60 (TDSTAQASHAAEQTIDAHQQAGDV) form a disordered region. RRM domains follow at residues 72 to 145 (PLLY…QDAS), 154 to 235 (KPRL…IDTA), and 321 to 398 (CNLF…LHEP). Positions 412–424 (AANADNSDMSSNS) are enriched in low complexity. 2 disordered regions span residues 412-438 (AANA…RQSR) and 630-649 (DESG…APVP). Polar residues predominate over residues 640 to 649 (RASSGSAPVP). The PABC domain maps to 715–792 (ATDDFIDSLQ…QHKVAAGLNK (78 aa)).

The protein belongs to the polyadenylate-binding protein type-1 family. Part of large ribonucleoprotein complexes (mRNPs) containing RNA-binding proteins RRM4 and PAB1, endosome-binding protein UPA1, core scaffold protein UPA2 and associated factor GRP1. Interacts (via PABC domain) with UPA1 (via PAM2 domain).

Its subcellular location is the cytoplasm. It is found in the cytoskeleton. The protein localises to the endosome. Its function is as follows. Key RNA-binding protein involved in the formation of polar-growing hyphae which is essential for infection by the plant pathogen. During filamentation, assembles into particles that shuttle bidirectionally along microtubules to both poles. The RRM4 transport particles are part of the endosomal mRNP transport that regulates polarity of the infectious hyphae by transporting distinct mRNAs encoding, for example, the ubiquitin fusion protein UBI1, the small G protein RHO3, or the septin CDC3, from the nucleus to cell poles. Recognizes a broad spectrum of cargo mRNAs and precisely binds at stop codons, which constitute landmark sites of translation, suggesting an intimate connection of mRNA transport and translation. Also binds to the specific binding motif UAUG of cargo mRNAs via its third RRM. Plus-end-directed KIN3, a kinesin-3 type motor, mediates anterograde transport of RRM4-containing mRNPs whereas split dynein DYM1-DYN2 functions in retrograde movement of mRNPs. This Mycosarcoma maydis (Corn smut fungus) protein is RNA-binding protein RRM4.